Reading from the N-terminus, the 208-residue chain is Protein-L-isoaspartate O-methyltransferase (208 aa).

The active site involves Ser59.

Belongs to the methyltransferase superfamily. L-isoaspartyl/D-aspartyl protein methyltransferase family.

Its subcellular location is the cytoplasm. It carries out the reaction [protein]-L-isoaspartate + S-adenosyl-L-methionine = [protein]-L-isoaspartate alpha-methyl ester + S-adenosyl-L-homocysteine. Catalyzes the methyl esterification of L-isoaspartyl residues in peptides and proteins that result from spontaneous decomposition of normal L-aspartyl and L-asparaginyl residues. It plays a role in the repair and/or degradation of damaged proteins. This chain is Protein-L-isoaspartate O-methyltransferase, found in Sodalis glossinidius (strain morsitans).